Reading from the N-terminus, the 142-residue chain is Hemoglobin subunit alpha-2 (142 aa).

Residues 2-142 enclose the Globin domain; it reads VLSPADKTNV…VSTVLTSKYR (141 aa). His-59 lines the O2 pocket. Residue His-88 participates in heme b binding.

The protein belongs to the globin family. As to quaternary structure, heterotetramer of two alpha chains and two beta chains. In terms of tissue distribution, red blood cells.

Functionally, involved in oxygen transport from the lung to the various peripheral tissues. Its function is as follows. Hemopressin acts as an antagonist peptide of the cannabinoid receptor CNR1. Hemopressin-binding efficiently blocks cannabinoid receptor CNR1 and subsequent signaling. The protein is Hemoglobin subunit alpha-2 (HBA2) of Hylobates lar (Lar gibbon).